The primary structure comprises 827 residues: Protein SEY1 (827 aa).

The segment at 1 to 26 (MSQSSPSNAETDEDLSTTSSSSSFVP) is disordered. The Cytoplasmic portion of the chain corresponds to 1-719 (MSQSSPSNAE…KRSIVQHVTQ (719 aa)). Residues 63 to 291 (GNNYHIISVF…VKKDLFRPNY (229 aa)) enclose the GB1/RHD3-type G domain. 73–80 (GSQSTGKS) is a GTP binding site. 2 coiled-coil regions span residues 389 to 409 (KSVYEQRKDLLKEKLNEKFRE) and 472 to 492 (VSNLQDQLTKLIQQQQLVELK). The chain crosses the membrane as a helical span at residues 720-740 (IPYYIYLVIMVLGWNEFMAIV). Topologically, residues 741–743 (RNP) are lumenal. Residues 744–764 (LFFSLVLVFGAGLYILYSMNL) form a helical membrane-spanning segment. The Cytoplasmic portion of the chain corresponds to 765–827 (LKPAMVVVQR…VVETIEMQDL (63 aa)). A coiled-coil region spans residues 803–823 (QKISASNREKVEEEKVVETIE).

This sequence belongs to the TRAFAC class dynamin-like GTPase superfamily. GB1/RHD3 GTPase family. RHD3 subfamily.

The protein localises to the endoplasmic reticulum membrane. Its function is as follows. Cooperates with the reticulon proteins and tubule-shaping DP1 family proteins to generate and maintain the structure of the tubular endoplasmic reticulum network. Has GTPase activity, which is required for its function in ER organization. In Scheffersomyces stipitis (strain ATCC 58785 / CBS 6054 / NBRC 10063 / NRRL Y-11545) (Yeast), this protein is Protein SEY1.